The primary structure comprises 1040 residues: Multidrug resistance protein MdtB (1040 aa).

Transmembrane regions (helical) follow at residues 16–36 (FIMR…AGII), 342–362 (DTQF…YLFL), 369–389 (IIPG…MVFL), 396–416 (LTLM…IVVI), 440–460 (IGFT…PLLF), 472–492 (FAVT…TLTP), 537–557 (WLTL…WVFI), 863–883 (LGST…VLGV), 888–908 (FIHP…ALLA), 911–931 (LAGS…IGIV), 968–988 (ILMT…STGV), and 998–1018 (IGMV…TPVI).

The protein belongs to the resistance-nodulation-cell division (RND) (TC 2.A.6) family. MdtB subfamily. Part of a tripartite efflux system composed of MdtA, MdtB and MdtC. MdtB forms a heteromultimer with MdtC.

It is found in the cell inner membrane. This chain is Multidrug resistance protein MdtB, found in Klebsiella pneumoniae (strain 342).